The sequence spans 538 residues: Cytochrome P450 monooxygenase claO (538 aa).

Transmembrane regions (helical) follow at residues 7–27 (IGAF…KLVG) and 222–242 (INPS…PILL). Residue Cys-475 participates in heme binding.

Belongs to the cytochrome P450 family. Requires heme as cofactor.

The protein localises to the membrane. The protein operates within secondary metabolite biosynthesis; terpenoid biosynthesis. In terms of biological role, cytochrome P450 monooxygenase; part of the gene cluster that mediates the biosynthesis of clavilactone A, a meroterpenoid that features a unique benzo-fused ten-membered carbocyclic ring unit with an alpha,beta-epoxy-gamma-lactone moiety, forming an intriguing 10/5/3 tricyclic nested skeleton. Cytochrome P450 monooxygenases claO, claP, claQ, claU, and claW are close orthologs, suggesting that a redundant function or pseudogenes are present in the cla cluster. These monoxygenases are not involved in clavilactone A biosynthesis nor in its modification. ClaR, ClaS and ClaT are sufficient to produce clavilactone A. The biosynthesis begins with the prenyltransferase claS that transfers geranyl pyrophosphate (GPP) to hydroquinone to produces geranylhydroquinone. The cytochrome P450 monooxygenase claR then catalyzes the diradical coupling reaction between the intramolecular hydroquinone and allyl moieties to form the benzo-fused ten-membered carbocyclic ring unit of wigantol. Finally the cytochrome P450 monooxygenase claT exquisitely and stereoselectively assembles the alpha,beta-epoxy-gamma-lactone moiety, producing clavilactone A via arnebinol A. The chain is Cytochrome P450 monooxygenase claO from Ampulloclitocybe clavipes (Club foot).